The chain runs to 389 residues: Chalcone synthase 1 (389 aa).

The active site involves Cys-164.

Belongs to the thiolase-like superfamily. Chalcone/stilbene synthases family.

It carries out the reaction (E)-4-coumaroyl-CoA + 3 malonyl-CoA + 3 H(+) = 2',4,4',6'-tetrahydroxychalcone + 3 CO2 + 4 CoA. It participates in secondary metabolite biosynthesis; flavonoid biosynthesis. The primary product of this enzyme is 4,2',4',6'-tetrahydroxychalcone (also termed naringenin-chalcone or chalcone) which can under specific conditions spontaneously isomerize into naringenin. This chain is Chalcone synthase 1 (CHS1), found in Medicago sativa (Alfalfa).